The following is a 104-amino-acid chain: Large ribosomal subunit protein bL21 (104 aa).

It belongs to the bacterial ribosomal protein bL21 family. As to quaternary structure, part of the 50S ribosomal subunit. Contacts protein L20.

Its function is as follows. This protein binds to 23S rRNA in the presence of protein L20. This is Large ribosomal subunit protein bL21 from Caldanaerobacter subterraneus subsp. tengcongensis (strain DSM 15242 / JCM 11007 / NBRC 100824 / MB4) (Thermoanaerobacter tengcongensis).